A 426-amino-acid chain; its full sequence is Growth-regulating factor 9 (426 aa).

One can recognise a QLQ domain in the interval proline 92–lysine 127. The WRC domain maps to aspartate 151–asparagine 195. 2 consecutive short sequence motifs (bipartite nuclear localization signal) follow at residues arginine 156–arginine 166 and arginine 184–lysine 191. The tract at residues arginine 184–alanine 222 is disordered. The span at lysine 191–lysine 202 shows a compositional bias: basic and acidic residues.

This sequence belongs to the GRF family.

It localises to the nucleus. Its function is as follows. Transcription activator that plays a regulatory role in gibberellin-induced stem elongation. The sequence is that of Growth-regulating factor 9 (GRF9) from Oryza sativa subsp. japonica (Rice).